The chain runs to 84 residues: Large ribosomal subunit protein bL27 (84 aa).

Positions 1 to 21 (MAHKKGASSTRNGRDSNAQRL) are disordered. Positions 7–19 (ASSTRNGRDSNAQ) are enriched in polar residues.

This sequence belongs to the bacterial ribosomal protein bL27 family.

This is Large ribosomal subunit protein bL27 from Clavibacter michiganensis subsp. michiganensis (strain NCPPB 382).